The following is a 693-amino-acid chain: UvrABC system protein C (693 aa).

The region spanning 16-95 (DAPGVYRFRD…IKEFDPRFNV (80 aa)) is the GIY-YIG domain. The UVR domain maps to 208–243 (GVFLRRLESEMAAASAELDFERAARVRDDINALRRV). The interval 656-693 (APSPDDATTEPGAVGEPGTADGAAADPDGRDAVVVPEG) is disordered. Over residues 672–693 (PGTADGAAADPDGRDAVVVPEG) the composition is skewed to low complexity.

It belongs to the UvrC family. In terms of assembly, interacts with UvrB in an incision complex.

It is found in the cytoplasm. Functionally, the UvrABC repair system catalyzes the recognition and processing of DNA lesions. UvrC both incises the 5' and 3' sides of the lesion. The N-terminal half is responsible for the 3' incision and the C-terminal half is responsible for the 5' incision. The polypeptide is UvrABC system protein C (Beutenbergia cavernae (strain ATCC BAA-8 / DSM 12333 / CCUG 43141 / JCM 11478 / NBRC 16432 / NCIMB 13614 / HKI 0122)).